Consider the following 383-residue polypeptide: UDP-N-acetylenolpyruvoylglucosamine reductase (383 aa).

Residues 1-13 show a composition bias toward basic and acidic residues; it reads MRTRRDVPADRSG. The interval 1–26 is disordered; sequence MRTRRDVPADRSGRSRVSRHPGLSVP. The 167-residue stretch at 49–215 folds into the FAD-binding PCMH-type domain; that stretch reads LGGPATRLLT…LRVRFELENA (167 aa). The active site involves arginine 192. The active-site Proton donor is the serine 271. Residue glutamate 375 is part of the active site.

The protein belongs to the MurB family. FAD serves as cofactor.

It is found in the cytoplasm. The enzyme catalyses UDP-N-acetyl-alpha-D-muramate + NADP(+) = UDP-N-acetyl-3-O-(1-carboxyvinyl)-alpha-D-glucosamine + NADPH + H(+). It participates in cell wall biogenesis; peptidoglycan biosynthesis. Functionally, cell wall formation. The sequence is that of UDP-N-acetylenolpyruvoylglucosamine reductase from Streptomyces coelicolor (strain ATCC BAA-471 / A3(2) / M145).